The chain runs to 385 residues: Neuropeptide Y receptor type 2 (385 aa).

The Extracellular portion of the chain corresponds to 1-54 (MGPLEAIGEENQTDEMKMELFTKLYLPRYTTPVSELALDPKPELKDSTTLVEVQ). Asn-11 carries an N-linked (GlcNAc...) asparagine glycan. The chain crosses the membrane as a helical span at residues 55 to 75 (IILIFAYCSIILLGVIGNSLV). Residues 76-90 (IHVIIKFKSMRTVTN) lie on the Cytoplasmic side of the membrane. The chain crosses the membrane as a helical span at residues 91–111 (FFIANLAVADLLVNTLCLPFT). The Extracellular segment spans residues 112–128 (LVYTLLGEWKLGPVLCH). Cys-127 and Cys-207 form a disulfide bridge. The chain crosses the membrane as a helical span at residues 129–149 (LVPYAQALAVHVSTVTLTVIA). Residues 150 to 169 (LDRHRCIVYHLESKISKRIS) lie on the Cytoplasmic side of the membrane. Residues 170-190 (FLIIGVAWAVSALLASPLAIF) traverse the membrane as a helical segment. The Extracellular segment spans residues 191–221 (REYSLIEIIPDFKIVVCSEKWPGEGQLNYGT). The helical transmembrane segment at 222–242 (IYSVSMLLIQYVLPLAIISYA) threads the bilayer. Over 243–273 (YTRIWTKLKNHVSPGAGNDHYHHRRQKTTKM) the chain is Cytoplasmic. Residues 274 to 294 (LVCVVVVFAVSWLPFHAFQLV) traverse the membrane as a helical segment. Topologically, residues 295 to 308 (SDIDSQVLDLKEYK) are extracellular. A helical membrane pass occupies residues 309 to 329 (LIYTVFHVIAMCSTFANPLLY). Residues 330–385 (GWMNNNYRTAFLTAFQCEQRLDSIHPEVSAAFKARKKLEAKKSQFPGDSFTQPTNV) lie on the Cytoplasmic side of the membrane. Cys-346 carries S-palmitoyl cysteine lipidation.

This sequence belongs to the G-protein coupled receptor 1 family.

It localises to the cell membrane. In terms of biological role, receptor for neuropeptide Y and peptide YY. This is Neuropeptide Y receptor type 2 (NPY2R) from Gallus gallus (Chicken).